Here is a 141-residue protein sequence, read N- to C-terminus: uncharacterized protein (141 aa).

The protein resides in the mitochondrion. This is an uncharacterized protein from Arabidopsis thaliana (Mouse-ear cress).